A 343-amino-acid polypeptide reads, in one-letter code: Heat-inducible transcription repressor HrcA (343 aa).

Belongs to the HrcA family.

Its function is as follows. Negative regulator of class I heat shock genes (grpE-dnaK-dnaJ and groELS operons). Prevents heat-shock induction of these operons. This chain is Heat-inducible transcription repressor HrcA, found in Mycobacterium avium (strain 104).